The sequence spans 779 residues: 3-isopropylmalate dehydratase (779 aa).

The [4Fe-4S] cluster site is built by Cys360, Cys421, and Cys424. A disordered region spans residues 484 to 518; the sequence is QDQSSPKVEVTSEDEKELESAAYDHAEPVQPEDAP. Ser488 carries the phosphoserine modification. Position 494 is a phosphothreonine (Thr494). Position 495 is a phosphoserine (Ser495). Basic and acidic residues predominate over residues 501–510; it reads LESAAYDHAE.

The protein belongs to the aconitase/IPM isomerase family. In terms of assembly, monomer. [4Fe-4S] cluster is required as a cofactor.

The enzyme catalyses (2R,3S)-3-isopropylmalate = (2S)-2-isopropylmalate. Its pathway is amino-acid biosynthesis; L-leucine biosynthesis; L-leucine from 3-methyl-2-oxobutanoate: step 2/4. Its function is as follows. Catalyzes the isomerization between 2-isopropylmalate and 3-isopropylmalate, via the formation of 2-isopropylmaleate. This chain is 3-isopropylmalate dehydratase (LEU1), found in Saccharomyces cerevisiae (strain ATCC 204508 / S288c) (Baker's yeast).